The sequence spans 177 residues: MSRVGKLPITIPEGVKIGLNDLEVKISGPKGELSKTFKGNIAISLAENKLLVKPLAANKNARAMWGTARSIISNMVTGVKEGFKLKLEINGVGYRAMVKGKYLNLMLAKSHNTKIEIPSDIKIEMPKQNIIILEGTDKEKLGQFASIIIKQRPPEPYKGKGIKFENQCIPRKEGKKN.

Belongs to the universal ribosomal protein uL6 family. As to quaternary structure, part of the 50S ribosomal subunit.

In terms of biological role, this protein binds to the 23S rRNA, and is important in its secondary structure. It is located near the subunit interface in the base of the L7/L12 stalk, and near the tRNA binding site of the peptidyltransferase center. The polypeptide is Large ribosomal subunit protein uL6 (Rickettsia conorii (strain ATCC VR-613 / Malish 7)).